A 504-amino-acid polypeptide reads, in one-letter code: Ribonuclease Y (504 aa).

Residues 2-22 traverse the membrane as a helical segment; sequence TTSIVIGVVLVTVGLTFGWTI. A KH domain is found at 194–279; the sequence is TVSTVNLPSE…EIVQKVTQEV (86 aa). The HD domain occupies 320–413; that stretch reads VLYHSKEVAL…VQVADAISAA (94 aa).

Belongs to the RNase Y family.

Its subcellular location is the cell membrane. Endoribonuclease that initiates mRNA decay. The chain is Ribonuclease Y from Treponema pallidum (strain Nichols).